The primary structure comprises 79 residues: Acyl carrier protein (79 aa).

The region spanning 2-77 (SDIEARVKKI…NAIDYANTHH (76 aa)) is the Carrier domain. Ser37 bears the O-(pantetheine 4'-phosphoryl)serine mark.

Belongs to the acyl carrier protein (ACP) family. In terms of processing, 4'-phosphopantetheine is transferred from CoA to a specific serine of apo-ACP by AcpS. This modification is essential for activity because fatty acids are bound in thioester linkage to the sulfhydryl of the prosthetic group.

It localises to the cytoplasm. Its pathway is lipid metabolism; fatty acid biosynthesis. In terms of biological role, carrier of the growing fatty acid chain in fatty acid biosynthesis. The polypeptide is Acyl carrier protein (Polaromonas naphthalenivorans (strain CJ2)).